The following is a 582-amino-acid chain: ATP-dependent lipid A-core flippase (582 aa).

A run of 5 helical transmembrane segments spans residues 16–36 (LWPT…ALIL), 63–83 (VLVW…ITSY), 153–173 (IIGL…ILIV), 253–273 (PIIQ…ASFP), and 275–295 (VMDN…IALM). The region spanning 28 to 310 (IVAGVALILN…LTNVNAQFQR (283 aa)) is the ABC transmembrane type-1 domain. Residues 342–578 (VEFRNVTFTY…RGVYAQLHKM (237 aa)) enclose the ABC transporter domain. 376-383 (GRSGSGKS) is an ATP binding site.

The protein belongs to the ABC transporter superfamily. Lipid exporter (TC 3.A.1.106) family. Homodimer.

It is found in the cell inner membrane. It catalyses the reaction ATP + H2O + lipid A-core oligosaccharideSide 1 = ADP + phosphate + lipid A-core oligosaccharideSide 2.. Involved in lipopolysaccharide (LPS) biosynthesis. Translocates lipid A-core from the inner to the outer leaflet of the inner membrane. Transmembrane domains (TMD) form a pore in the inner membrane and the ATP-binding domain (NBD) is responsible for energy generation. In Shigella flexneri, this protein is ATP-dependent lipid A-core flippase.